Here is a 149-residue protein sequence, read N- to C-terminus: Large ribosomal subunit protein bL9 (149 aa).

The protein belongs to the bacterial ribosomal protein bL9 family.

In terms of biological role, binds to the 23S rRNA. The chain is Large ribosomal subunit protein bL9 from Helicobacter pylori (strain HPAG1).